The sequence spans 170 residues: MARLNVLVYPDERLKIIAKPVVEVNDEIREIVDNMFETMYLEEGIGLAATQVNIHQRIITIDVEGTKENQYVLINPEIIDSCGETGIEEGCLSLPGFRGFVPRKEKVTIKALDRHGEEYTLSAEGLLAICIQHEIDHLNGIVFADYLSPLKRQRMKEKLLKLQKQLARQK.

Residues Cys91 and His133 each contribute to the Fe cation site. Glu134 is an active-site residue. His137 contributes to the Fe cation binding site.

This sequence belongs to the polypeptide deformylase family. It depends on Fe(2+) as a cofactor.

The enzyme catalyses N-terminal N-formyl-L-methionyl-[peptide] + H2O = N-terminal L-methionyl-[peptide] + formate. Functionally, removes the formyl group from the N-terminal Met of newly synthesized proteins. Requires at least a dipeptide for an efficient rate of reaction. N-terminal L-methionine is a prerequisite for activity but the enzyme has broad specificity at other positions. In Pasteurella multocida (strain Pm70), this protein is Peptide deformylase.